The following is a 393-amino-acid chain: S-adenosylmethionine synthase (393 aa).

Histidine 16 is an ATP binding site. Aspartate 18 is a binding site for Mg(2+). K(+) is bound at residue glutamate 44. 2 residues coordinate L-methionine: glutamate 57 and glutamine 100. The flexible loop stretch occupies residues 100-110; the sequence is QSNDIAQGVDH. Residues 167-169, 238-239, aspartate 247, 253-254, alanine 270, and lysine 274 each bind ATP; these read DAK, RF, and RK. Position 247 (aspartate 247) interacts with L-methionine. Lysine 278 provides a ligand contact to L-methionine.

This sequence belongs to the AdoMet synthase family. Homotetramer; dimer of dimers. The cofactor is Mg(2+). It depends on K(+) as a cofactor.

The protein resides in the cytoplasm. It catalyses the reaction L-methionine + ATP + H2O = S-adenosyl-L-methionine + phosphate + diphosphate. The protein operates within amino-acid biosynthesis; S-adenosyl-L-methionine biosynthesis; S-adenosyl-L-methionine from L-methionine: step 1/1. Catalyzes the formation of S-adenosylmethionine (AdoMet) from methionine and ATP. The overall synthetic reaction is composed of two sequential steps, AdoMet formation and the subsequent tripolyphosphate hydrolysis which occurs prior to release of AdoMet from the enzyme. The protein is S-adenosylmethionine synthase of Albidiferax ferrireducens (strain ATCC BAA-621 / DSM 15236 / T118) (Rhodoferax ferrireducens).